The chain runs to 95 residues: MSDSIETAPVNTPAARRTAVGARRPFYRRRKACPFSGPNAPKIDYKDVRLLSRFLSERGKIVPSRITAVSAKKQRELARAIKRARFLALLPYVVD.

Belongs to the bacterial ribosomal protein bS18 family. Part of the 30S ribosomal subunit. Forms a tight heterodimer with protein bS6.

In terms of biological role, binds as a heterodimer with protein bS6 to the central domain of the 16S rRNA, where it helps stabilize the platform of the 30S subunit. The chain is Small ribosomal subunit protein bS18 from Acidiphilium cryptum (strain JF-5).